A 309-amino-acid chain; its full sequence is Carbamate kinase 3 (309 aa).

This sequence belongs to the carbamate kinase family.

Its subcellular location is the cytoplasm. It catalyses the reaction hydrogencarbonate + NH4(+) + ATP = carbamoyl phosphate + ADP + H2O + H(+). The protein operates within metabolic intermediate metabolism; carbamoyl phosphate degradation; CO(2) and NH(3) from carbamoyl phosphate: step 1/1. This chain is Carbamate kinase 3 (arcC3), found in Staphylococcus aureus (strain USA300).